Here is a 261-residue protein sequence, read N- to C-terminus: UPF0328 protein ECU02_0020/ECU04_1700 (261 aa).

The tract at residues 1–20 (MSITSIPQPHETNEQHHTEI) is disordered. Over residues 11–20 (ETNEQHHTEI) the composition is skewed to basic and acidic residues.

Belongs to the UPF0328 family.

The sequence is that of UPF0328 protein ECU02_0020/ECU04_1700 from Encephalitozoon cuniculi (strain GB-M1) (Microsporidian parasite).